The sequence spans 294 residues: Lipoyl synthase (294 aa).

[4Fe-4S] cluster contacts are provided by Cys41, Cys46, Cys52, Cys67, Cys71, Cys74, and Ser281. Residues 53 to 270 enclose the Radical SAM core domain; it reads FNNGTATFMI…KLESLAMGFT (218 aa).

This sequence belongs to the radical SAM superfamily. Lipoyl synthase family. [4Fe-4S] cluster serves as cofactor.

It localises to the cytoplasm. The catalysed reaction is [[Fe-S] cluster scaffold protein carrying a second [4Fe-4S](2+) cluster] + N(6)-octanoyl-L-lysyl-[protein] + 2 oxidized [2Fe-2S]-[ferredoxin] + 2 S-adenosyl-L-methionine + 4 H(+) = [[Fe-S] cluster scaffold protein] + N(6)-[(R)-dihydrolipoyl]-L-lysyl-[protein] + 4 Fe(3+) + 2 hydrogen sulfide + 2 5'-deoxyadenosine + 2 L-methionine + 2 reduced [2Fe-2S]-[ferredoxin]. The protein operates within protein modification; protein lipoylation via endogenous pathway; protein N(6)-(lipoyl)lysine from octanoyl-[acyl-carrier-protein]: step 2/2. Functionally, catalyzes the radical-mediated insertion of two sulfur atoms into the C-6 and C-8 positions of the octanoyl moiety bound to the lipoyl domains of lipoate-dependent enzymes, thereby converting the octanoylated domains into lipoylated derivatives. This Baumannia cicadellinicola subsp. Homalodisca coagulata protein is Lipoyl synthase.